A 520-amino-acid chain; its full sequence is 2-isopropylmalate synthase (520 aa).

A Pyruvate carboxyltransferase domain is found at 12 to 274; the sequence is VIIFDTTLRD…WNKIDTTQLT (263 aa). Residues Asp21, His209, His211, and Asn245 each coordinate Mn(2+). Positions 398–520 are regulatory domain; it reads KLTSLTVIAG…RDTVTTAAAS (123 aa).

It belongs to the alpha-IPM synthase/homocitrate synthase family. LeuA type 1 subfamily. As to quaternary structure, homodimer. It depends on Mn(2+) as a cofactor.

The protein localises to the cytoplasm. The catalysed reaction is 3-methyl-2-oxobutanoate + acetyl-CoA + H2O = (2S)-2-isopropylmalate + CoA + H(+). It participates in amino-acid biosynthesis; L-leucine biosynthesis; L-leucine from 3-methyl-2-oxobutanoate: step 1/4. Its function is as follows. Catalyzes the condensation of the acetyl group of acetyl-CoA with 3-methyl-2-oxobutanoate (2-ketoisovalerate) to form 3-carboxy-3-hydroxy-4-methylpentanoate (2-isopropylmalate). This is 2-isopropylmalate synthase from Bradyrhizobium diazoefficiens (strain JCM 10833 / BCRC 13528 / IAM 13628 / NBRC 14792 / USDA 110).